The following is a 256-amino-acid chain: Protein LIKE COV 1 (256 aa).

Basic and acidic residues predominate over residues 1 to 10; it reads MANRERDREL. The tract at residues 1 to 39 is disordered; sequence MANRERDRELLIPVADFGDKDDGSSSKPSSSSSASSSHQ. The Cytoplasmic segment spans residues 1-60; the sequence is MANRERDRELLIPVADFGDKDDGSSSKPSSSSSASSSHQSGHETLSLFIRGWASKKFMTG. Positions 25 to 39 are enriched in low complexity; the sequence is SSKPSSSSSASSSHQ. A helical transmembrane segment spans residues 61-81; sequence CVILLPIAVTFYTTWWFIHFV. Over 82–93 the chain is Extracellular; the sequence is DGFFSPIYALLG. The helical transmembrane segment at 94 to 114 threads the bilayer; that stretch reads INIFGFGFLTSIAFIFLVGVF. Residues 115 to 256 are Cytoplasmic-facing; the sequence is MSSWLGASVL…KPLASIGNES (142 aa).

It belongs to the plant COV1 protein family. Expressed at low levels in flowers, stems, roots and leaves.

It localises to the membrane. The protein is Protein LIKE COV 1 of Arabidopsis thaliana (Mouse-ear cress).